The sequence spans 549 residues: Glucose-6-phosphate isomerase (549 aa).

Catalysis depends on Glu-353, which acts as the Proton donor. Active-site residues include His-384 and Lys-512.

The protein belongs to the GPI family.

The protein resides in the cytoplasm. It catalyses the reaction alpha-D-glucose 6-phosphate = beta-D-fructose 6-phosphate. It participates in carbohydrate biosynthesis; gluconeogenesis. The protein operates within carbohydrate degradation; glycolysis; D-glyceraldehyde 3-phosphate and glycerone phosphate from D-glucose: step 2/4. Functionally, catalyzes the reversible isomerization of glucose-6-phosphate to fructose-6-phosphate. In Solidesulfovibrio magneticus (strain ATCC 700980 / DSM 13731 / RS-1) (Desulfovibrio magneticus), this protein is Glucose-6-phosphate isomerase.